The primary structure comprises 417 residues: Probable metalloprotease arx1 (417 aa).

This sequence belongs to the peptidase M24 family. Component of the nucleoplasmic and cytoplasmic pre-60S ribosomal particles.

It localises to the cytoplasm. The protein localises to the nucleus. Probable metalloprotease involved in proper assembly of pre-ribosomal particles during the biogenesis of the 60S ribosomal subunit. Accompanies the pre-60S particles to the cytoplasm. This Schizosaccharomyces pombe (strain 972 / ATCC 24843) (Fission yeast) protein is Probable metalloprotease arx1 (arx1).